Here is a 135-residue protein sequence, read N- to C-terminus: C-type lectin Cal (135 aa).

4 disulfide bridges follow: Cys-3–Cys-14, Cys-31–Cys-131, Cys-38–Cys-133, and Cys-106–Cys-123. Residues 10–132 (MNGLCYKIFN…CESKDAFLCQ (123 aa)) form the C-type lectin domain. 5 residues coordinate Ca(2+): Gln-96, Asp-98, Glu-104, Asn-119, and Asp-120. The Galactose-binding signature appears at 96–98 (QPD).

It belongs to the true venom lectin family. In terms of assembly, homodecamer of disulfide-linked dimers arranged in two pseudo-5-fold symmetric pentamers. Expressed by the venom gland.

The protein resides in the secreted. Its function is as follows. Galactose-binding protein which recognizes specific carbohydrate structures and agglutinates a variety of animal cells by binding to cell-surface glycoproteins and glycolipids. Calcium-dependent lectin. Shows high hemagglutinating activity (MHC=10 ng/ml). The protein is C-type lectin Cal of Crotalus atrox (Western diamondback rattlesnake).